Consider the following 129-residue polypeptide: uncharacterized protein (129 aa).

Positions 1–129 (MGRMASPLRS…PARQSARMAR (129 aa)) are disordered. Positions 18–46 (ESTRHKETSTVRVETSSHREETSSHRVET) are enriched in basic and acidic residues. A compositionally biased stretch (low complexity) spans 47 to 59 (SSRQVRTSSRQVE). Over residues 70-97 (LTPSTKRLPQFLEVSSQHVETSSQCTET) the composition is skewed to polar residues.

This is an uncharacterized protein from Mus musculus (Mouse).